Reading from the N-terminus, the 256-residue chain is Adenosine 5'-phosphosulfate reductase (256 aa).

[4Fe-4S] cluster is bound by residues cysteine 120, cysteine 121, cysteine 203, and cysteine 206. Residue cysteine 231 is the Nucleophile; cysteine thiosulfonate intermediate of the active site.

This sequence belongs to the PAPS reductase family. CysH subfamily. It depends on [4Fe-4S] cluster as a cofactor.

Its subcellular location is the cytoplasm. It catalyses the reaction [thioredoxin]-disulfide + sulfite + AMP + 2 H(+) = adenosine 5'-phosphosulfate + [thioredoxin]-dithiol. Its pathway is sulfur metabolism; hydrogen sulfide biosynthesis; sulfite from sulfate. In terms of biological role, catalyzes the formation of sulfite from adenosine 5'-phosphosulfate (APS) using thioredoxin as an electron donor. This Allochromatium vinosum (strain ATCC 17899 / DSM 180 / NBRC 103801 / NCIMB 10441 / D) (Chromatium vinosum) protein is Adenosine 5'-phosphosulfate reductase.